We begin with the raw amino-acid sequence, 540 residues long: Sensory neuron membrane protein 1 (540 aa).

The Cytoplasmic segment spans residues 1 to 105; the sequence is MRTDDPVIGN…WIFRPDLSKP (105 aa). A helical transmembrane segment spans residues 106 to 126; that stretch reads LTGDEMITIPHPLILGALLMV. The Extracellular segment spans residues 127–436; the sequence is QRDREAMMPL…YTLFLGLRFN (310 aa). Asn-193 and Asn-206 each carry an N-linked (GlcNAc...) asparagine glycan. Cystine bridges form between Cys-245–Cys-310, Cys-274–Cys-330, and Cys-312–Cys-319. The N-linked (GlcNAc...) asparagine glycan is linked to Asn-418. The chain crosses the membrane as a helical span at residues 437–457; that stretch reads TAVKWLTIIIGTIGTIVGGFM. Residues 458–540 lie on the Cytoplasmic side of the membrane; the sequence is HYKRTTKMVN…VTVTEMQERY (83 aa).

Belongs to the CD36 family.

Its subcellular location is the cell membrane. In terms of biological role, plays an olfactory role that is not restricted to pheromone sensitivity. This Aedes aegypti (Yellowfever mosquito) protein is Sensory neuron membrane protein 1.